The primary structure comprises 273 residues: 4-hydroxy-tetrahydrodipicolinate reductase (273 aa).

NAD(+)-binding positions include 12–17 (GAGGRM) and Glu-38. Arg-39 lines the NADP(+) pocket. Residues 102–104 (GTT) and 126–129 (AANF) contribute to the NAD(+) site. Residue His-159 is the Proton donor/acceptor of the active site. A (S)-2,3,4,5-tetrahydrodipicolinate-binding site is contributed by His-160. The active-site Proton donor is the Lys-163. 169 to 170 (GT) contributes to the (S)-2,3,4,5-tetrahydrodipicolinate binding site.

Belongs to the DapB family. As to quaternary structure, homotetramer.

It is found in the cytoplasm. The enzyme catalyses (S)-2,3,4,5-tetrahydrodipicolinate + NAD(+) + H2O = (2S,4S)-4-hydroxy-2,3,4,5-tetrahydrodipicolinate + NADH + H(+). It carries out the reaction (S)-2,3,4,5-tetrahydrodipicolinate + NADP(+) + H2O = (2S,4S)-4-hydroxy-2,3,4,5-tetrahydrodipicolinate + NADPH + H(+). The protein operates within amino-acid biosynthesis; L-lysine biosynthesis via DAP pathway; (S)-tetrahydrodipicolinate from L-aspartate: step 4/4. Catalyzes the conversion of 4-hydroxy-tetrahydrodipicolinate (HTPA) to tetrahydrodipicolinate. The chain is 4-hydroxy-tetrahydrodipicolinate reductase from Yersinia pestis bv. Antiqua (strain Antiqua).